The sequence spans 59 residues: Large ribosomal subunit protein bL32 (59 aa).

Residues 1–59 (MAVQQNKKSPSKRGMHRSHDHLSVAPLAVEPTTGETHLRHHVSPNGYYRGRKVIKTKND) are disordered. Composition is skewed to basic residues over residues 9–19 (SPSKRGMHRSH) and 49–59 (RGRKVIKTKND).

The protein belongs to the bacterial ribosomal protein bL32 family.

The protein is Large ribosomal subunit protein bL32 of Cupriavidus metallidurans (strain ATCC 43123 / DSM 2839 / NBRC 102507 / CH34) (Ralstonia metallidurans).